The primary structure comprises 230 residues: ATP synthase subunit a 1 (230 aa).

Transmembrane regions (helical) follow at residues A20–T40, F78–F98, A112–I132, L174–F194, and G195–A215.

The protein belongs to the ATPase A chain family. F-type ATPases have 2 components, CF(1) - the catalytic core - and CF(0) - the membrane proton channel. CF(1) has five subunits: alpha(3), beta(3), gamma(1), delta(1), epsilon(1). CF(0) has four main subunits: a, b, b' and c.

Its subcellular location is the cellular thylakoid membrane. Key component of the proton channel; it plays a direct role in the translocation of protons across the membrane. In Crocosphaera subtropica (strain ATCC 51142 / BH68) (Cyanothece sp. (strain ATCC 51142)), this protein is ATP synthase subunit a 1.